A 103-amino-acid chain; its full sequence is Large ribosomal subunit protein bL21 (103 aa).

This sequence belongs to the bacterial ribosomal protein bL21 family. In terms of assembly, part of the 50S ribosomal subunit. Contacts protein L20.

Functionally, this protein binds to 23S rRNA in the presence of protein L20. This Clostridium acetobutylicum (strain ATCC 824 / DSM 792 / JCM 1419 / IAM 19013 / LMG 5710 / NBRC 13948 / NRRL B-527 / VKM B-1787 / 2291 / W) protein is Large ribosomal subunit protein bL21.